Reading from the N-terminus, the 195-residue chain is Protein GrpE (195 aa).

Belongs to the GrpE family. Homodimer.

Its subcellular location is the cytoplasm. Its function is as follows. Participates actively in the response to hyperosmotic and heat shock by preventing the aggregation of stress-denatured proteins, in association with DnaK and GrpE. It is the nucleotide exchange factor for DnaK and may function as a thermosensor. Unfolded proteins bind initially to DnaJ; upon interaction with the DnaJ-bound protein, DnaK hydrolyzes its bound ATP, resulting in the formation of a stable complex. GrpE releases ADP from DnaK; ATP binding to DnaK triggers the release of the substrate protein, thus completing the reaction cycle. Several rounds of ATP-dependent interactions between DnaJ, DnaK and GrpE are required for fully efficient folding. The sequence is that of Protein GrpE from Blochmanniella floridana.